The chain runs to 475 residues: Beta-amyrin 28-monooxygenase (475 aa).

Residues 2–22 (YLTILFLFVSSILLSLMFLLR) traverse the membrane as a helical segment. Position 422 (C422) interacts with heme.

Belongs to the cytochrome P450 family. Heme serves as cofactor.

Its subcellular location is the membrane. It carries out the reaction beta-amyrin + 3 reduced [NADPH--hemoprotein reductase] + 3 O2 = oleanolate + 3 oxidized [NADPH--hemoprotein reductase] + 4 H2O + 4 H(+). Its function is as follows. Catalyzes the oxidation of the methyl group to a carboxyl group at the C-28 position of beta-amyrin to form oleanolate. This is Beta-amyrin 28-monooxygenase from Barbarea vulgaris (Yellow rocket).